The sequence spans 290 residues: Undecaprenyl-diphosphatase (290 aa).

Helical transmembrane passes span 39–59, 85–105, 118–138, 202–222, 230–250, and 261–281; these read PGAA…LIYF, AQMG…GITL, LIAT…RLAA, SFLL…KDVG, PTIF…AWFM, and FVIY…AGVL.

The protein belongs to the UppP family.

The protein localises to the cell membrane. The enzyme catalyses di-trans,octa-cis-undecaprenyl diphosphate + H2O = di-trans,octa-cis-undecaprenyl phosphate + phosphate + H(+). Catalyzes the dephosphorylation of undecaprenyl diphosphate (UPP). Confers resistance to bacitracin. The sequence is that of Undecaprenyl-diphosphatase from Streptomyces griseus subsp. griseus (strain JCM 4626 / CBS 651.72 / NBRC 13350 / KCC S-0626 / ISP 5235).